We begin with the raw amino-acid sequence, 408 residues long: 4-hydroxy-3-methylbut-2-en-1-yl diphosphate synthase (ferredoxin) (408 aa).

Polar residues predominate over residues 1–21 (MQTLPTPTTSSNTANQSTFDT). Residues 1 to 26 (MQTLPTPTTSSNTANQSTFDTTIKRR) are disordered. [4Fe-4S] cluster contacts are provided by cysteine 317, cysteine 320, cysteine 351, and glutamate 358.

It belongs to the IspG family. The cofactor is [4Fe-4S] cluster.

The catalysed reaction is (2E)-4-hydroxy-3-methylbut-2-enyl diphosphate + 2 oxidized [2Fe-2S]-[ferredoxin] + H2O = 2-C-methyl-D-erythritol 2,4-cyclic diphosphate + 2 reduced [2Fe-2S]-[ferredoxin] + H(+). The protein operates within isoprenoid biosynthesis; isopentenyl diphosphate biosynthesis via DXP pathway; isopentenyl diphosphate from 1-deoxy-D-xylulose 5-phosphate: step 5/6. In terms of biological role, converts 2C-methyl-D-erythritol 2,4-cyclodiphosphate (ME-2,4cPP) into 1-hydroxy-2-methyl-2-(E)-butenyl 4-diphosphate. This Trichormus variabilis (strain ATCC 29413 / PCC 7937) (Anabaena variabilis) protein is 4-hydroxy-3-methylbut-2-en-1-yl diphosphate synthase (ferredoxin).